The chain runs to 308 residues: Methionyl-tRNA formyltransferase (308 aa).

107-110 (SLLP) provides a ligand contact to (6S)-5,6,7,8-tetrahydrofolate.

This sequence belongs to the Fmt family.

The enzyme catalyses L-methionyl-tRNA(fMet) + (6R)-10-formyltetrahydrofolate = N-formyl-L-methionyl-tRNA(fMet) + (6S)-5,6,7,8-tetrahydrofolate + H(+). Attaches a formyl group to the free amino group of methionyl-tRNA(fMet). The formyl group appears to play a dual role in the initiator identity of N-formylmethionyl-tRNA by promoting its recognition by IF2 and preventing the misappropriation of this tRNA by the elongation apparatus. The sequence is that of Methionyl-tRNA formyltransferase from Carboxydothermus hydrogenoformans (strain ATCC BAA-161 / DSM 6008 / Z-2901).